Reading from the N-terminus, the 320-residue chain is Cytochrome f (320 aa).

An N-terminal signal peptide occupies residues 1-35 (MENKNTFSWVKEQMTRSISVSIMIYVITQTSISNA). Tyr36, Cys56, Cys59, and His60 together coordinate heme. A helical transmembrane segment spans residues 286–306 (VQGLLFFFASVILAQVFLVLK).

Belongs to the cytochrome f family. As to quaternary structure, the 4 large subunits of the cytochrome b6-f complex are cytochrome b6, subunit IV (17 kDa polypeptide, petD), cytochrome f and the Rieske protein, while the 4 small subunits are PetG, PetL, PetM and PetN. The complex functions as a dimer. It depends on heme as a cofactor.

It localises to the plastid. Its subcellular location is the chloroplast thylakoid membrane. Component of the cytochrome b6-f complex, which mediates electron transfer between photosystem II (PSII) and photosystem I (PSI), cyclic electron flow around PSI, and state transitions. This is Cytochrome f from Lolium perenne (Perennial ryegrass).